A 222-amino-acid polypeptide reads, in one-letter code: Chorionic somatomammotropin hormone-like 1 (222 aa).

Positions 1–26 (MAAGSRTSLLLAFALLCLPWLQEAGA) are cleaved as a signal peptide. 2 residues coordinate Zn(2+): His44 and Glu205. Cys213 and Cys220 are disulfide-bonded.

This sequence belongs to the somatotropin/prolactin family.

Its subcellular location is the secreted. In terms of biological role, may be a novel gestational hormone required to compensate for absence of other members of the GH/CS cluster during gestation. In Homo sapiens (Human), this protein is Chorionic somatomammotropin hormone-like 1 (CSHL1).